Here is a 667-residue protein sequence, read N- to C-terminus: Sorting nexin mvp1 (667 aa).

Positions 221 to 268 (AGNLHSQQPPKFSVDSSVDDNAITPRKPFSKIPNRLSPSTQPLLSNSR) are disordered. Residues 224-236 (LHSQQPPKFSVDS) are compositionally biased toward polar residues. The region spanning 279–398 (TSFPASLEMN…RVFFTEPNVF (120 aa)) is the PX domain. Residues R320, S322, and K346 each coordinate a 1,2-diacyl-sn-glycero-3-phospho-(1D-myo-inositol-3-phosphate). A disordered region spans residues 574–594 (ANSDESGRNRTFLNRSSKKRA).

This sequence belongs to the sorting nexin family. In terms of assembly, homodimer. Forms an autoinhibited tetramer consisting of 2 homodimers that self-interact, wherein the membrane-interacting BAR surfaces are sequestered and the PX lipid-binding sites are occluded. Interacts with Vps1.

The protein resides in the cytoplasm. The protein localises to the endosome membrane. Required for vacuolar protein sorting. Component of the retromer-mediated endosome-to-Golgi retrograde pathway. Required for efficient cargo export from the endosome, promoting Vps1-mediated fission of retromer-coated tubules that bud from the endosome. The polypeptide is Sorting nexin mvp1 (mvp1) (Schizosaccharomyces pombe (strain 972 / ATCC 24843) (Fission yeast)).